Reading from the N-terminus, the 204-residue chain is Holliday junction branch migration complex subunit RuvA (204 aa).

A domain I region spans residues M1–H64. The tract at residues S65–A143 is domain II. Residues I144–A154 form a flexible linker region. A domain III region spans residues A154 to A204.

It belongs to the RuvA family. In terms of assembly, homotetramer. Forms an RuvA(8)-RuvB(12)-Holliday junction (HJ) complex. HJ DNA is sandwiched between 2 RuvA tetramers; dsDNA enters through RuvA and exits via RuvB. An RuvB hexamer assembles on each DNA strand where it exits the tetramer. Each RuvB hexamer is contacted by two RuvA subunits (via domain III) on 2 adjacent RuvB subunits; this complex drives branch migration. In the full resolvosome a probable DNA-RuvA(4)-RuvB(12)-RuvC(2) complex forms which resolves the HJ.

The protein localises to the cytoplasm. Its function is as follows. The RuvA-RuvB-RuvC complex processes Holliday junction (HJ) DNA during genetic recombination and DNA repair, while the RuvA-RuvB complex plays an important role in the rescue of blocked DNA replication forks via replication fork reversal (RFR). RuvA specifically binds to HJ cruciform DNA, conferring on it an open structure. The RuvB hexamer acts as an ATP-dependent pump, pulling dsDNA into and through the RuvAB complex. HJ branch migration allows RuvC to scan DNA until it finds its consensus sequence, where it cleaves and resolves the cruciform DNA. In Magnetococcus marinus (strain ATCC BAA-1437 / JCM 17883 / MC-1), this protein is Holliday junction branch migration complex subunit RuvA.